Here is a 193-residue protein sequence, read N- to C-terminus: Bifunctional protein PyrR (193 aa).

Substrate contacts are provided by residues 48-49 (TR), Arg89, Arg93, 110-118 (DDVLFSGRT), Arg143, and Val167. The PRPP-binding motif lies at 106-118 (VVLVDDVLFSGRT).

This sequence belongs to the purine/pyrimidine phosphoribosyltransferase family. PyrR subfamily.

The catalysed reaction is UMP + diphosphate = 5-phospho-alpha-D-ribose 1-diphosphate + uracil. Its function is as follows. Regulates the transcription of the pyrimidine nucleotide (pyr) operon in response to exogenous pyrimidines. Functionally, also displays a weak uracil phosphoribosyltransferase activity which is not physiologically significant. In Streptomyces coelicolor (strain ATCC BAA-471 / A3(2) / M145), this protein is Bifunctional protein PyrR.